The sequence spans 341 residues: MTYRDAGVDIDAGNALVERIKPLVKRSFRPEVMGGLGGFGALFDLSGKYKEPVLVSGTDGVGTKLKLAQQLGRHDTIGIDLVGMCVNDVLVQGAEPLFFLDYFATGKLDIDTAAAVVGGIARGCELSGCALIGGETAEMPDMYPPGEYDLAGFTVGAVEKSQLLDGAQVREGDVLIGIASSGPHSNGYSLIRKIYERAGAPADLVLDDGVALIDALMAPTALYVKPILALLKSHGEAIHAMAHVTGGGLTENIIRVIPDGLGLDIDATAWILPPVFAWLQREGAVADAEMWRTFNCGIGFVLVAAPAQAAALEQALDAQSLAHWRIGQVVTAQGDERVRIG.

The protein belongs to the AIR synthase family.

It localises to the cytoplasm. It carries out the reaction 2-formamido-N(1)-(5-O-phospho-beta-D-ribosyl)acetamidine + ATP = 5-amino-1-(5-phospho-beta-D-ribosyl)imidazole + ADP + phosphate + H(+). The protein operates within purine metabolism; IMP biosynthesis via de novo pathway; 5-amino-1-(5-phospho-D-ribosyl)imidazole from N(2)-formyl-N(1)-(5-phospho-D-ribosyl)glycinamide: step 2/2. The polypeptide is Phosphoribosylformylglycinamidine cyclo-ligase (Xanthomonas campestris pv. campestris (strain B100)).